The sequence spans 803 residues: Protein translocase subunit SecA (803 aa).

ATP is bound by residues glutamine 100, glycine 118–threonine 122, and aspartate 508.

It belongs to the SecA family. As to quaternary structure, monomer and homodimer. Part of the essential Sec protein translocation apparatus which comprises SecA, SecYEG and auxiliary proteins SecDF. Other proteins may also be involved.

The protein resides in the cell membrane. Its subcellular location is the cytoplasm. The catalysed reaction is ATP + H2O + cellular proteinSide 1 = ADP + phosphate + cellular proteinSide 2.. Its function is as follows. Part of the Sec protein translocase complex. Interacts with the SecYEG preprotein conducting channel. Has a central role in coupling the hydrolysis of ATP to the transfer of proteins into and across the cell membrane, serving as an ATP-driven molecular motor driving the stepwise translocation of polypeptide chains across the membrane. The chain is Protein translocase subunit SecA from Leuconostoc mesenteroides subsp. mesenteroides (strain ATCC 8293 / DSM 20343 / BCRC 11652 / CCM 1803 / JCM 6124 / NCDO 523 / NBRC 100496 / NCIMB 8023 / NCTC 12954 / NRRL B-1118 / 37Y).